Consider the following 764-residue polypeptide: Ribosomal protein S6 kinase alpha-6 (764 aa).

Positions 1-24 (MLPFAPVEDPWDQEDMEVFGSTSS) are disordered. Residues 93 to 350 (FDLLKVLGQG…VEEVKRHAFF (258 aa)) enclose the Protein kinase 1 domain. Residues 99-107 (LGQGSFGKV) and Lys125 contribute to the ATP site. Residue Asp218 is the Proton acceptor of the active site. 3 positions are modified to phosphoserine: Ser252, Ser392, and Ser409. Residues 351 to 420 (ASIDWNKLYK…VATSIAEEYK (70 aa)) form the AGC-kinase C-terminal domain. One can recognise a Protein kinase 2 domain in the interval 446-706 (YELKEDIGIG…VLKHPWITQR (261 aa)). ATP-binding positions include 452 to 460 (IGIGSYSVC) and Lys475. Asp563 functions as the Proton acceptor in the catalytic mechanism. A Phosphothreonine modification is found at Thr601.

It belongs to the protein kinase superfamily. AGC Ser/Thr protein kinase family. S6 kinase subfamily. In terms of assembly, forms a complex with MAPK3/ERK1 but not with MAPK9 or MAPK14 in serum-starved cells. Mg(2+) is required as a cofactor. Phosphorylated at Ser-252, Ser-392, and Ser-409 in serum-starved cells.

The protein resides in the cytoplasm. It localises to the cytosol. The protein localises to the nucleus. The catalysed reaction is L-seryl-[protein] + ATP = O-phospho-L-seryl-[protein] + ADP + H(+). The enzyme catalyses L-threonyl-[protein] + ATP = O-phospho-L-threonyl-[protein] + ADP + H(+). Its activity is regulated as follows. Constitutively activated by phosphorylation at Ser-252, Ser-392, and Ser-409 in serum-starved cells. Does not require growth factor stimulation for significant kinase activity. Its function is as follows. Constitutively active serine/threonine-protein kinase that exhibits growth-factor-independent kinase activity and that may participate in p53/TP53-dependent cell growth arrest signaling and play an inhibitory role during embryogenesis. The chain is Ribosomal protein S6 kinase alpha-6 (Rps6ka6) from Mus musculus (Mouse).